Reading from the N-terminus, the 293-residue chain is TBC1 domain family member 7 (293 aa).

Residues 50–231 (PLPSMYRALV…RVWDKVVSGS (182 aa)) enclose the Rab-GAP TBC domain.

Component of the TSC-TBC complex (also named Rhebulator complex), composed of 2 molecules of TSC1, 2 molecules of TSC2 and 1 molecule of TBC1D7. Interacts with TSC1 (via C-terminal half of the coiled-coil domain). Highly expressed in heart, and slightly in kidney, liver and placenta.

The protein resides in the lysosome membrane. It is found in the cytoplasmic vesicle. The protein localises to the cytoplasm. It localises to the cytosol. In terms of biological role, non-catalytic component of the TSC-TBC complex, a multiprotein complex that acts as a negative regulator of the canonical mTORC1 complex, an evolutionarily conserved central nutrient sensor that stimulates anabolic reactions and macromolecule biosynthesis to promote cellular biomass generation and growth. The TSC-TBC complex acts as a GTPase-activating protein (GAP) for the small GTPase RHEB, a direct activator of the protein kinase activity of mTORC1. In absence of nutrients, the TSC-TBC complex inhibits mTORC1, thereby preventing phosphorylation of ribosomal protein S6 kinase (RPS6KB1 and RPS6KB2) and EIF4EBP1 (4E-BP1) by the mTORC1 signaling. The TSC-TBC complex is inactivated in response to nutrients, relieving inhibition of mTORC1. The polypeptide is TBC1 domain family member 7 (Homo sapiens (Human)).